The following is a 68-amino-acid chain: Adipokinetic prohormone type 1 (68 aa).

Residues 1 to 20 form the signal peptide; the sequence is MNKIYFVIVFVACFCLFAEA. Position 21 is a pyrrolidone carboxylic acid (Q21). At G30 the chain carries Glycine amide. Positions 34-68 are excised as a propeptide; it reads SGVAPMSCKNEEAVATIFKLIQNEAERFIICQQKS.

In terms of tissue distribution, expressed in antennal lobe (AL), corpora cardiaca (CC), corpora allata (CA) and gnathal ganglion (GNG) (at protein level). Expression in CC and CA detected in all animals, expression in GNG in some animals and in AL in few animals (at protein level).

Its subcellular location is the secreted. This hormone, released from cells in the corpora cardiaca, causes release of diglycerides from the fat body and stimulation of muscles to use these diglycerides as an energy source during energy-demanding processes. The chain is Adipokinetic prohormone type 1 from Agrotis ipsilon (Black cutworm moth).